Here is a 175-residue protein sequence, read N- to C-terminus: Phosphatidylglycerol/phosphatidylinositol transfer protein (175 aa).

The first 21 residues, 1 to 21, serve as a signal peptide directing secretion; the sequence is MKFLSTAAALLVCLAPVSTTA. Positions 22 to 37 are excised as a propeptide; sequence RSLDFFKSSQSPIQAQ.

Belongs to the NPC2 family. As to quaternary structure, monomer.

The protein localises to the cytoplasm. The protein resides in the cytoplasmic vesicle. It is found in the golgi apparatus. Its function is as follows. Catalyzes the intermembrane transfer of phosphatidylglycerol and phosphatidylinositol. The polypeptide is Phosphatidylglycerol/phosphatidylinositol transfer protein (pltp) (Aspergillus oryzae (strain ATCC 42149 / RIB 40) (Yellow koji mold)).